The primary structure comprises 591 residues: V-type ATP synthase alpha chain (591 aa).

233-240 (GPFGAGKT) is a binding site for ATP.

It belongs to the ATPase alpha/beta chains family.

The catalysed reaction is ATP + H2O + 4 H(+)(in) = ADP + phosphate + 5 H(+)(out). Functionally, produces ATP from ADP in the presence of a proton gradient across the membrane. The V-type alpha chain is a catalytic subunit. This Streptococcus pyogenes serotype M12 (strain MGAS2096) protein is V-type ATP synthase alpha chain.